Here is a 137-residue protein sequence, read N- to C-terminus: Basic phospholipase A2 homolog Bsc-K49 (137 aa).

The first 16 residues, Met-1–Gly-16, serve as a signal peptide directing secretion. 7 disulfides stabilise this stretch: Cys-42–Cys-131, Cys-44–Cys-60, Cys-59–Cys-111, Cys-65–Cys-137, Cys-66–Cys-104, Cys-73–Cys-97, and Cys-91–Cys-102. The important for membrane-damaging activities in eukaryotes and bacteria; heparin-binding stretch occupies residues Lys-121–Lys-133.

The protein belongs to the phospholipase A2 family. Group II subfamily. K49 sub-subfamily. In terms of assembly, homodimer; non-covalently linked. Expressed by the venom gland.

It is found in the secreted. In terms of biological role, snake venom phospholipase A2 that lacks enzymatic activity. Is myotoxic, and displays edema-inducing activities. A model of myotoxic mechanism has been proposed: an apo Lys49-PLA2 is activated by the entrance of a hydrophobic molecule (e.g. fatty acid) at the hydrophobic channel of the protein leading to a reorientation of a monomer. This reorientation causes a transition between 'inactive' to 'active' states, causing alignment of C-terminal and membrane-docking sites (MDoS) side-by-side and putting the membrane-disruption sites (MDiS) in the same plane, exposed to solvent and in a symmetric position for both monomers. The MDoS region stabilizes the toxin on membrane by the interaction of charged residues with phospholipid head groups. Subsequently, the MDiS region destabilizes the membrane with penetration of hydrophobic residues. This insertion causes a disorganization of the membrane, allowing an uncontrolled influx of ions (i.e. calcium and sodium), and eventually triggering irreversible intracellular alterations and cell death. The sequence is that of Basic phospholipase A2 homolog Bsc-K49 from Bothriechis schlegelii (Eyelash palm pitviper).